A 2214-amino-acid polypeptide reads, in one-letter code: Multifunctional protein URA2 (2214 aa).

Ala-2 is subject to N-acetylalanine. The segment at 2 to 400 (ATIAPTAPIT…PGPRDTEFLF (399 aa)) is GATase (Glutamine amidotransferase). The L-glutamine site is built by Ser-64, Gly-273, and Gly-275. Residues 228-413 (RILAIDVGMK…IQAVKEFKYT (186 aa)) enclose the Glutamine amidotransferase type-1 domain. The Nucleophile; for GATase activity role is filled by Cys-302. Residues Leu-303, Gln-306, Asn-344, Gly-346, and Phe-347 each coordinate L-glutamine. Catalysis depends on for GATase activity residues His-386 and Glu-388. The tract at residues 401–440 (DVFIQAVKEFKYTQVLKPIAFPGGLLEDNVKAHPRIEAKK) is linker. Residues 440-980 (KVLVLGSGGL…DSHDLSFDDH (541 aa)) are CPSase A. The tract at residues 440–1482 (KVLVLGSGGL…TNVKCAKLLI (1043 aa)) is CPSase (Carbamoyl phosphate synthase). Residues Arg-558, Arg-598, Gly-604, Gly-605, Lys-635, Met-637, Glu-642, Gly-668, Ile-669, His-670, Gln-711, and Glu-725 each contribute to the ATP site. ATP-grasp domains are found at residues 562–754 (SNAI…KLGL) and 1099–1290 (SRML…KAIM). Mg(2+) is bound by residues Gln-711, Glu-725, and Asn-727. The Mn(2+) site is built by Gln-711, Glu-725, and Asn-727. Residues 981–1482 (GVMVLGSGVY…TNVKCAKLLI (502 aa)) are CPSase B. Residues Arg-1135, Lys-1174, Ile-1176, Glu-1181, Gly-1206, Val-1207, His-1208, Ser-1209, Gln-1249, and Glu-1261 each coordinate ATP. Residues Gln-1249, Glu-1261, and Asn-1263 each coordinate Mg(2+). Mn(2+) contacts are provided by Gln-1249, Glu-1261, and Asn-1263. The MGS-like domain maps to 1356 to 1508 (FKLPKKNILL…QTSHRTITLP (153 aa)). Residues 1483–1492 (EAISRNITLD) are linker. A defective DHOase domain region spans residues 1493–1821 (VSERDAQTSH…YNGETLVLSG (329 aa)). Positions 1822–1909 (ELVSPGAKGK…NLIRSNNPFR (88 aa)) are linker. Residue Lys-1853 forms a Glycyl lysine isopeptide (Lys-Gly) (interchain with G-Cter in ubiquitin) linkage. Ser-1857 carries the phosphoserine; by PKA modification. An ATCase (Aspartate transcarbamylase) region spans residues 1910 to 2214 (GRHILSIKQF…LLAMVMGVDM (305 aa)). 2 residues coordinate carbamoyl phosphate: Arg-1962 and Thr-1963. Position 1990 (Lys-1990) interacts with L-aspartate. Arg-2011, His-2039, and Gln-2042 together coordinate carbamoyl phosphate. L-aspartate is bound by residues Arg-2072 and Arg-2134. Carbamoyl phosphate-binding residues include Leu-2173 and Pro-2174.

The protein in the N-terminal section; belongs to the CarA family. This sequence in the 2nd section; belongs to the CarB family. It in the 3rd section; belongs to the metallo-dependent hydrolases superfamily. DHOase family. CAD subfamily. In the C-terminal section; belongs to the aspartate/ornithine carbamoyltransferase superfamily. ATCase family. The cofactor is Mg(2+). Mn(2+) is required as a cofactor.

Its subcellular location is the cytoplasm. The enzyme catalyses hydrogencarbonate + L-glutamine + 2 ATP + H2O = carbamoyl phosphate + L-glutamate + 2 ADP + phosphate + 2 H(+). It catalyses the reaction L-glutamine + H2O = L-glutamate + NH4(+). The catalysed reaction is hydrogencarbonate + NH4(+) + 2 ATP = carbamoyl phosphate + 2 ADP + phosphate + 2 H(+). It carries out the reaction carbamoyl phosphate + L-aspartate = N-carbamoyl-L-aspartate + phosphate + H(+). Its pathway is pyrimidine metabolism; UMP biosynthesis via de novo pathway; (S)-dihydroorotate from bicarbonate: step 1/3. It functions in the pathway pyrimidine metabolism; UMP biosynthesis via de novo pathway; (S)-dihydroorotate from bicarbonate: step 2/3. Its activity is regulated as follows. Both CPSase and ATCase activities are feedback inhibited by the end product UTP. Functionally, multifunctional protein that encodes the first 2 enzymatic activities of the de novo pyrimidine pathway: carbamoylphosphate synthetase (CPSase; EC 6.3.5.5) and aspartate transcarbamylase (ATCase; EC 2.1.3.2). The CPSase-function is accomplished in 2 steps, by a glutamine-dependent amidotransferase activity (GATase) that binds and cleaves glutamine to produce ammonia, followed by an ammonium-dependent carbamoyl phosphate synthetase, which reacts with the ammonia, hydrogencarbonate and ATP to form carbamoyl phosphate. The endogenously produced carbamoyl phosphate is sequestered and channeled to the ATCase active site. ATCase then catalyzes the formation of carbamoyl-L-aspartate from L-aspartate and carbamoyl phosphate. The polypeptide is Multifunctional protein URA2 (URA2) (Saccharomyces cerevisiae (strain ATCC 204508 / S288c) (Baker's yeast)).